Reading from the N-terminus, the 429-residue chain is Glutamyl-tRNA reductase (429 aa).

Substrate contacts are provided by residues 52-55 (TCNR), serine 110, 115-117 (EAQ), and glutamine 121. Cysteine 53 functions as the Nucleophile in the catalytic mechanism. 190–195 (GAGAMI) serves as a coordination point for NADP(+).

This sequence belongs to the glutamyl-tRNA reductase family. In terms of assembly, homodimer.

The enzyme catalyses (S)-4-amino-5-oxopentanoate + tRNA(Glu) + NADP(+) = L-glutamyl-tRNA(Glu) + NADPH + H(+). It functions in the pathway porphyrin-containing compound metabolism; protoporphyrin-IX biosynthesis; 5-aminolevulinate from L-glutamyl-tRNA(Glu): step 1/2. Functionally, catalyzes the NADPH-dependent reduction of glutamyl-tRNA(Glu) to glutamate 1-semialdehyde (GSA). The protein is Glutamyl-tRNA reductase of Verminephrobacter eiseniae (strain EF01-2).